The primary structure comprises 443 residues: ATP-dependent protease ATPase subunit HslU (443 aa).

Residues I19, 61–66 (GVGKTE), D256, E321, and R393 each bind ATP.

The protein belongs to the ClpX chaperone family. HslU subfamily. As to quaternary structure, a double ring-shaped homohexamer of HslV is capped on each side by a ring-shaped HslU homohexamer. The assembly of the HslU/HslV complex is dependent on binding of ATP.

It is found in the cytoplasm. ATPase subunit of a proteasome-like degradation complex; this subunit has chaperone activity. The binding of ATP and its subsequent hydrolysis by HslU are essential for unfolding of protein substrates subsequently hydrolyzed by HslV. HslU recognizes the N-terminal part of its protein substrates and unfolds these before they are guided to HslV for hydrolysis. The polypeptide is ATP-dependent protease ATPase subunit HslU (Ralstonia nicotianae (strain ATCC BAA-1114 / GMI1000) (Ralstonia solanacearum)).